Here is a 437-residue protein sequence, read N- to C-terminus: Serine carboxypeptidase-like 17 (437 aa).

Positions 1-26 are cleaved as a signal peptide; the sequence is MGKECYYLSWILKFHLLLVLIQLVDS. Disulfide bonds link Cys85-Cys327, Cys249-Cys263, and Cys287-Cys293. Residue Asn106 is glycosylated (N-linked (GlcNAc...) asparagine). Ser181 is an active-site residue. Residue Asp362 is part of the active site. Asn378 carries N-linked (GlcNAc...) asparagine glycosylation. His415 is a catalytic residue.

Belongs to the peptidase S10 family. As to expression, expressed in seedlings and siliques.

The protein localises to the secreted. Probable carboxypeptidase. The protein is Serine carboxypeptidase-like 17 (SCPL17) of Arabidopsis thaliana (Mouse-ear cress).